Here is a 504-residue protein sequence, read N- to C-terminus: MSSDNLDISMEKKYSADVDVEKAPTPEYGEVETAPLSQSSWIYRRPRIGRFKSLAYGSALTQTIIVSWVCFLCPGMFNALSGLGGGGEVNADVANDANVALYSTFAGLGFFAGSICNLIGVKLTLAIGGTGYSVYTASLLCYKHVYNRGFVIFGGCYLGLTAGMLWAAQGAVIMSYPREENKARYIAIFWGIFNLGAVIGSIVPLAQTMHSSVNSVGDGTYAGFIVLMAVGSALALFMVSPEKTVKEDGKFVHIEKSMGWKKELLGLVQTLYKEYWVLLLFPMFFSSNWFTTYQFNDFNLAYFNIRTRSLNNLLYWFAQIMGSAVAALFLDWQRFNRVIRARVGWGLVFVLICVIWGGGLAFQLKYTRKSVAESDFVVTDFTHRGYTGYAFLYIFYGMLDAIFQSYAYWIIGSLSNDTNKLAVYMGFYKSLQSAGAAITYRMDTLNIPYMNYFASCWALLCGSLIVASPVIWKKIKLTTEGIEDEIPPLANGLAVDGPVVPLKE.

The next 11 helical transmembrane spans lie at 64–84 (IIVS…SGLG), 97–116 (ANVA…GSIC), 123–145 (LTLA…YKHV), 149–169 (GFVI…WAAQ), 186–206 (IAIF…VPLA), 219–239 (GTYA…LFMV), 275–293 (YWVL…FTTY), 310–330 (LNNL…ALFL), 343–363 (VGWG…LAFQ), 391–411 (FLYI…YWII), and 452–472 (YFAS…PVIW).

It belongs to the unc-93 family.

The protein resides in the cytoplasm. The protein localises to the membrane. This is UNC93-like protein C922.05c from Schizosaccharomyces pombe (strain 972 / ATCC 24843) (Fission yeast).